Consider the following 431-residue polypeptide: Tyrosine--tRNA ligase (431 aa).

Residue tyrosine 33 coordinates L-tyrosine. The 'HIGH' region motif lies at 38–47 (PTADSLHIGS). L-tyrosine is bound by residues tyrosine 172 and glutamine 176. Positions 234 to 238 (KFGKS) match the 'KMSKS' region motif. Lysine 237 contacts ATP. Positions 364–431 (LDIVTVLNEK…KKNYFVIRVV (68 aa)) constitute an S4 RNA-binding domain.

This sequence belongs to the class-I aminoacyl-tRNA synthetase family. TyrS type 1 subfamily. Homodimer.

Its subcellular location is the cytoplasm. The catalysed reaction is tRNA(Tyr) + L-tyrosine + ATP = L-tyrosyl-tRNA(Tyr) + AMP + diphosphate + H(+). Catalyzes the attachment of tyrosine to tRNA(Tyr) in a two-step reaction: tyrosine is first activated by ATP to form Tyr-AMP and then transferred to the acceptor end of tRNA(Tyr). This Flavobacterium johnsoniae (strain ATCC 17061 / DSM 2064 / JCM 8514 / BCRC 14874 / CCUG 350202 / NBRC 14942 / NCIMB 11054 / UW101) (Cytophaga johnsonae) protein is Tyrosine--tRNA ligase.